We begin with the raw amino-acid sequence, 362 residues long: MKESKKRVLVGMSGGIDSTATCLMLQEQGYEIVGVTMRVWGDEPQDARELAARMGIEHYVADERVPFKDTIVKNFIDEYRQGRTPNPCVMCNPLFKFRMLIEWADKLGCDWIATGHYSRLEERNGHIYIVAGDDDKKDQSYFLWRLGQDVLRRCIFPLGNYTKQTVRDYLREKGYEAKSKEGESMEVCFIKGDYRDFLREQCPELDAEVGPGWFVSSEGVKLGQHKGFPYYTIGQRKGLEIALGKPAYVLKINPQKNTVMLGDAGQLRAEYMVAEQDNIVDEDELFACPDLAVRIRYRSRPIPCRVKRLEDGRLLVRFLAEASAIAPGQSAVFYEGRRVLGGAFIASQRGIGLVIEQNKDWK.

ATP contacts are provided by residues 11–18 (GMSGGIDS) and methionine 37. The active-site Nucleophile is the cysteine 91. A disulfide bond links cysteine 91 and cysteine 188. Position 115 (glycine 115) interacts with ATP. The segment at 137-139 (KDQ) is interaction with tRNA. Catalysis depends on cysteine 188, which acts as the Cysteine persulfide intermediate. An interaction with tRNA region spans residues 296–297 (RY).

The protein belongs to the MnmA/TRMU family.

It is found in the cytoplasm. The catalysed reaction is S-sulfanyl-L-cysteinyl-[protein] + uridine(34) in tRNA + AH2 + ATP = 2-thiouridine(34) in tRNA + L-cysteinyl-[protein] + A + AMP + diphosphate + H(+). Its function is as follows. Catalyzes the 2-thiolation of uridine at the wobble position (U34) of tRNA, leading to the formation of s(2)U34. The protein is tRNA-specific 2-thiouridylase MnmA 3 of Bacteroides fragilis (strain ATCC 25285 / DSM 2151 / CCUG 4856 / JCM 11019 / LMG 10263 / NCTC 9343 / Onslow / VPI 2553 / EN-2).